The sequence spans 543 residues: ATP-dependent ubiquitin transferase-like protein Cap2 (543 aa).

The E2-like domain stretch occupies residues Met-1–Gly-159. The active-site For E2-like domain is Cys-84. The interval Cys-160–Ser-305 is linker domain. Positions Lys-306–Ser-543 are adenylation plus E1-like domain. Catalysis depends on for E1-like domain residues Cys-450 and Cys-453.

This sequence in the C-terminal section; belongs to the HesA/MoeB/ThiF family. Forms a Cap2-CdnA complex. A Cap2 dimer is bound on either side by a CdnA monomer.

In terms of biological role, CD-NTase priming component of a CBASS antiviral system. CBASS (cyclic oligonucleotide-based antiphage signaling system) provides immunity against bacteriophages. The CD-NTase protein (CdnA) synthesizes cyclic nucleotides in response to infection; these serve as specific second messenger signals. The signals activate a diverse range of effectors, leading to bacterial cell death and thus abortive phage infection. A type II-A(GA) CBASS system. Acts as a protein transferase, conjugating CdnA, the CD-NTase, to unidentified target(s) in the cell probably via an E1-E2 ubiquitin transferase-like mechanism. This primes CdnA, upon phage infection CdnA activates and makes cyclic nucleotides. Protein conjugation requires ATP. Its function is as follows. The capV-cdnA-cap2-cap3 operon provides about 10(4)-fold protection in strain BWHPSA011 against infection by phage PaMx41. In P.aeruginosa strain PAO1 it confers protection against phages PaMx41 and JBD18 but not JBD67 (JBD18 and JBD67 do not replicate in BWHPSA011 / Pa011). When acb2 in JBD67 is deleted this CBASS operon then protects against JDB67 also. This CBASS system limits prophage induction of lysogenized JBD67 as well as viral lytic replication. The polypeptide is ATP-dependent ubiquitin transferase-like protein Cap2 (Pseudomonas aeruginosa (strain BWHPSA011 / Pa011)).